Reading from the N-terminus, the 186-residue chain is Adenylate kinase (186 aa).

ATP is bound at residue 10 to 15; the sequence is GVGKGT. The NMP stretch occupies residues 30 to 59; sequence STGDIFRYNIKNKTELGLEAMSYTDKGELV. AMP contacts are provided by residues T31, R36, 57–59, 85–88, and Q92; these read ELV and GYPR. Residues 126–136 are LID; sequence KRAAEQGRADD. R127 provides a ligand contact to ATP. Positions 133 and 144 each coordinate AMP. An ATP-binding site is contributed by G172.

This sequence belongs to the adenylate kinase family. Monomer.

It is found in the cytoplasm. The enzyme catalyses AMP + ATP = 2 ADP. Its pathway is purine metabolism; AMP biosynthesis via salvage pathway; AMP from ADP: step 1/1. In terms of biological role, catalyzes the reversible transfer of the terminal phosphate group between ATP and AMP. Plays an important role in cellular energy homeostasis and in adenine nucleotide metabolism. This Bifidobacterium longum (strain NCC 2705) protein is Adenylate kinase.